The primary structure comprises 467 residues: Ankyrin repeat and SOCS box protein 10 (467 aa).

ANK repeat units lie at residues 115 to 144, 147 to 176, 180 to 209, 214 to 243, 247 to 289, 293 to 322, and 326 to 361; these read ELTT…RPDS, GGRT…DPNI, DGKR…RVDG, EEET…CPDA, EGWT…DADA, DKQR…SANT, and GGHT…AVRV. The SOCS box domain occupies 412–464; sequence YSSLFALVRQPRSLQHLSRCALRSHLEGSLPQALPRLPLPPRLLRYLQLDFEG.

The protein belongs to the ankyrin SOCS box (ASB) family. As to expression, expressed in the eye. The highest expression is observed in the iris, with moderate levels in the trabecular meshwork (TM), the lamina, and the optic nerve; slightly lower levels in the ciliary body, retina, and choroid; and very low levels in the lens.

Its subcellular location is the cytoplasm. The protein resides in the nucleus. Its pathway is protein modification; protein ubiquitination. In terms of biological role, may be a substrate-recognition component of a SCF-like ECS (Elongin-Cullin-SOCS-box protein) E3 ubiquitin-protein ligase complex which mediates the ubiquitination and subsequent proteasomal degradation of target proteins. This is Ankyrin repeat and SOCS box protein 10 (ASB10) from Homo sapiens (Human).